The following is a 296-amino-acid chain: Acetylglutamate kinase (296 aa).

Substrate is bound by residues 69-70 (GG), Arg91, and Asn193.

This sequence belongs to the acetylglutamate kinase family. ArgB subfamily.

The protein localises to the cytoplasm. It carries out the reaction N-acetyl-L-glutamate + ATP = N-acetyl-L-glutamyl 5-phosphate + ADP. The protein operates within amino-acid biosynthesis; L-arginine biosynthesis; N(2)-acetyl-L-ornithine from L-glutamate: step 2/4. Catalyzes the ATP-dependent phosphorylation of N-acetyl-L-glutamate. In Verminephrobacter eiseniae (strain EF01-2), this protein is Acetylglutamate kinase.